A 449-amino-acid chain; its full sequence is Phosphoglucosamine mutase (449 aa).

S100 (phosphoserine intermediate) is an active-site residue. Positions 100, 241, 243, and 245 each coordinate Mg(2+). The residue at position 100 (S100) is a Phosphoserine.

This sequence belongs to the phosphohexose mutase family. Mg(2+) serves as cofactor. Activated by phosphorylation.

It carries out the reaction alpha-D-glucosamine 1-phosphate = D-glucosamine 6-phosphate. Its function is as follows. Catalyzes the conversion of glucosamine-6-phosphate to glucosamine-1-phosphate. This is Phosphoglucosamine mutase from Clostridium botulinum (strain Loch Maree / Type A3).